The following is a 596-amino-acid chain: Zinc finger E-box-binding homeobox protein zag-1 (596 aa).

Residues 24-46 (FKCPECTKAFKFKHHLKEHIRIH) form a C2H2-type 1 zinc finger. Residues 52–72 (FECQQCHKRFSHSGSYSSHMS) form a C2H2-type 2; degenerate zinc finger. Polar residues predominate over residues 133–145 (LENGTSPTPTQEP). Disordered stretches follow at residues 133–225 (LENG…RPLR), 324–369 (NNSL…EPEW), and 395–421 (GFVTNQEDEEEKPIKAEESPVSSGSSS). Positions 165–179 (SEVKTEVKTEVKTED) are enriched in basic and acidic residues. Residues 188-200 (PAVSMSLSPAPEQ) show a composition bias toward polar residues. Residues 201–216 (NGNESMNNGGSGSDGK) show a composition bias toward low complexity. Residues 223 to 282 (PLRSRSFLNDSQVAVLQNHFKRNPFPSKYELSAVAEQIGVNKRVVQVWFQNTRAKERRSN) constitute a DNA-binding region (homeobox). The span at 331–355 (QDERNNENTDEVMDHDGLKDGKETP) shows a compositional bias: basic and acidic residues. 2 C2H2-type zinc fingers span residues 481–503 (FSCDQCDKVFGKQSSLARHKYEH) and 509–531 (YKCDICEKAFKHKHHLTEHKRLH). The segment at 537-560 (FQCDKCLKRFSHSGSYSQHMNHRY) adopts a C2H2-type 5; degenerate zinc-finger fold. Positions 569–596 (QPASPSDVLNGGSVTVSPSSSNTPPPST) are disordered. Over residues 578–590 (NGGSVTVSPSSSN) the composition is skewed to low complexity.

Expressed in the six touch receptor neurons (TRNs) but not in the FLP and PVD neurons. Expressed in the M4 cholinergic motor neuron.

It localises to the nucleus. In terms of biological role, transcription factor. Down-regulates expression of genes involved in either the synthesis or reuptake of serotonin, dopamine and GABA. Acts as a transcriptional repressor to regulate multiple, discrete, neuron-specific aspects of terminal differentiation, including cell migration, axonal development and gene expression. Promotes touch receptor neuron differentiation by repressing the expression of egl-44 and egl-46. As egl-44 and egl-46, probably acting as a heterodimer, repress expression of zag-1 in FLP neurons, together these proteins form a bistable, negative-feedback loop that regulates the choice between neuronal fates. Required for axon guidance. Involved in the proper development of the pharynx. Required for pharynx isthmus peristalsis, probably via a role in the differentiation of the M4 cholinergic motor neuron. Directly represses its own transcription by interacting with conserved E-box sequence motifs 5'-CACCTG-3' in its own promoter. May also act as a transcriptional activator of the homeodomain ceh-28. In Caenorhabditis elegans, this protein is Zinc finger E-box-binding homeobox protein zag-1.